Consider the following 158-residue polypeptide: SsrA-binding protein (158 aa).

A disordered region spans residues 133–158; sequence KIHDKRETEAKRDWNRQKQRLLKDNA. Residues 136-158 are compositionally biased toward basic and acidic residues; that stretch reads DKRETEAKRDWNRQKQRLLKDNA.

The protein belongs to the SmpB family.

Its subcellular location is the cytoplasm. Required for rescue of stalled ribosomes mediated by trans-translation. Binds to transfer-messenger RNA (tmRNA), required for stable association of tmRNA with ribosomes. tmRNA and SmpB together mimic tRNA shape, replacing the anticodon stem-loop with SmpB. tmRNA is encoded by the ssrA gene; the 2 termini fold to resemble tRNA(Ala) and it encodes a 'tag peptide', a short internal open reading frame. During trans-translation Ala-aminoacylated tmRNA acts like a tRNA, entering the A-site of stalled ribosomes, displacing the stalled mRNA. The ribosome then switches to translate the ORF on the tmRNA; the nascent peptide is terminated with the 'tag peptide' encoded by the tmRNA and targeted for degradation. The ribosome is freed to recommence translation, which seems to be the essential function of trans-translation. The polypeptide is SsrA-binding protein (Ruegeria pomeroyi (strain ATCC 700808 / DSM 15171 / DSS-3) (Silicibacter pomeroyi)).